The primary structure comprises 559 residues: Oxygen-dependent choline dehydrogenase (559 aa).

4 to 33 (DYIIIGAGSAGNVLATRLTEDSDVTVLLLE) contributes to the FAD binding site. H473 serves as the catalytic Proton acceptor.

The protein belongs to the GMC oxidoreductase family. FAD is required as a cofactor.

It carries out the reaction choline + A = betaine aldehyde + AH2. The enzyme catalyses betaine aldehyde + NAD(+) + H2O = glycine betaine + NADH + 2 H(+). It functions in the pathway amine and polyamine biosynthesis; betaine biosynthesis via choline pathway; betaine aldehyde from choline (cytochrome c reductase route): step 1/1. In terms of biological role, involved in the biosynthesis of the osmoprotectant glycine betaine. Catalyzes the oxidation of choline to betaine aldehyde and betaine aldehyde to glycine betaine at the same rate. In Cronobacter sakazakii (strain ATCC BAA-894) (Enterobacter sakazakii), this protein is Oxygen-dependent choline dehydrogenase.